A 275-amino-acid polypeptide reads, in one-letter code: Light-independent protochlorophyllide reductase iron-sulfur ATP-binding protein (275 aa).

Residues 12–17 (GIGKST) and Lys41 contribute to the ATP site. Position 16 (Ser16) interacts with Mg(2+). [4Fe-4S] cluster-binding residues include Cys97 and Cys131. Residue 182–183 (NR) coordinates ATP.

The protein belongs to the NifH/BchL/ChlL family. In terms of assembly, homodimer. Protochlorophyllide reductase is composed of three subunits; BchL, BchN and BchB. [4Fe-4S] cluster is required as a cofactor.

It catalyses the reaction chlorophyllide a + oxidized 2[4Fe-4S]-[ferredoxin] + 2 ADP + 2 phosphate = protochlorophyllide a + reduced 2[4Fe-4S]-[ferredoxin] + 2 ATP + 2 H2O. It functions in the pathway porphyrin-containing compound metabolism; bacteriochlorophyll biosynthesis (light-independent). Functionally, component of the dark-operative protochlorophyllide reductase (DPOR) that uses Mg-ATP and reduced ferredoxin to reduce ring D of protochlorophyllide (Pchlide) to form chlorophyllide a (Chlide). This reaction is light-independent. The L component serves as a unique electron donor to the NB-component of the complex, and binds Mg-ATP. In Prosthecochloris aestuarii (strain DSM 271 / SK 413), this protein is Light-independent protochlorophyllide reductase iron-sulfur ATP-binding protein.